Consider the following 238-residue polypeptide: Probable transcriptional regulatory protein YeeN (238 aa).

This sequence belongs to the TACO1 family. YeeN subfamily.

Its subcellular location is the cytoplasm. In Salmonella typhi, this protein is Probable transcriptional regulatory protein YeeN.